The chain runs to 414 residues: MANSC domain-containing protein 1 (414 aa).

The N-terminal stretch at 1 to 24 (MLFRGTSLAYSLLVISFLTPRSSA) is a signal peptide. The Extracellular segment spans residues 25–369 (GQNCLTKSLE…HGLSFEKWLL (345 aa)). One can recognise an MANSC domain in the interval 32–116 (SLEDVVIDIQ…LKPAKGLVTY (85 aa)). N128, N234, and N335 each carry an N-linked (GlcNAc...) asparagine glycan. Residues 311–339 (FQGGSTLTSDPRHGKSSTSESSITNKTAS) form a disordered region. Residues 326 to 338 (SSTSESSITNKTA) show a composition bias toward polar residues. The helical transmembrane segment at 370 to 392 (IGTLLCGVLFLVIGLVLLGRMLV) threads the bilayer. Over 393–414 (EALRRKRYSRLDYLINGIYVDI) the chain is Cytoplasmic.

It localises to the membrane. The protein is MANSC domain-containing protein 1 (Mansc1) of Mus musculus (Mouse).